Consider the following 181-residue polypeptide: CDP-diacylglycerol--glycerol-3-phosphate 3-phosphatidyltransferase (181 aa).

Helical transmembrane passes span 8–28 (PNYL…TFYI), 35–55 (MLGA…GYIA), 64–84 (FGKM…IIML), and 148–168 (IIYL…LTII).

Belongs to the CDP-alcohol phosphatidyltransferase class-I family.

The protein localises to the cell membrane. It catalyses the reaction a CDP-1,2-diacyl-sn-glycerol + sn-glycerol 3-phosphate = a 1,2-diacyl-sn-glycero-3-phospho-(1'-sn-glycero-3'-phosphate) + CMP + H(+). Its pathway is phospholipid metabolism; phosphatidylglycerol biosynthesis; phosphatidylglycerol from CDP-diacylglycerol: step 1/2. In terms of biological role, this protein catalyzes the committed step to the synthesis of the acidic phospholipids. The protein is CDP-diacylglycerol--glycerol-3-phosphate 3-phosphatidyltransferase (pgsA) of Rickettsia bellii (strain RML369-C).